We begin with the raw amino-acid sequence, 329 residues long: NAC domain-containing protein 79 (329 aa).

In terms of domain architecture, NAC spans 17-167 (LPPGFRFHPT…EWVICRVFHK (151 aa)). The DNA-binding element occupies 114–173 (VGMKKTLVFYRGRAPKGQKTNWVMHEYRLDGKLSAHNLPKTAKNEWVICRVFHKTAGGKK).

As to expression, expressed at low levels in leaves.

The protein localises to the nucleus. The protein is NAC domain-containing protein 79 of Arabidopsis thaliana (Mouse-ear cress).